Here is a 541-residue protein sequence, read N- to C-terminus: Transmembrane protein 87A (541 aa).

Residues 1 to 26 (MAAASFQPLKCLLLWVFFVITPPVKA) form the signal peptide. At 27-209 (VPEPGIWTVP…HGFISASDWP (183 aa)) the chain is on the lumenal side. 4 N-linked (GlcNAc...) asparagine glycosylation sites follow: Asn52, Asn109, Asn148, and Asn189. Cystine bridges form between Cys65–Cys116 and Cys82–Cys416. A helical membrane pass occupies residues 210–230 (LMIFYMVMCIMYILLALLWFI). Residues 231 to 241 (WSACYWKDLLR) lie on the Cytoplasmic side of the membrane. A helical transmembrane segment spans residues 242 to 262 (IQFWIAAVIFLGMLEKAVYYA). The Lumenal segment spans residues 263 to 293 (EYQNTDNTGVSSHGLLIFAELISSIKRTLAR). The chain crosses the membrane as a helical span at residues 294 to 314 (LLVTIVSLGYGIIKPRLGAVM). Residues 315 to 316 (HR) lie on the Cytoplasmic side of the membrane. A helical membrane pass occupies residues 317 to 337 (VVGMGVLYFVFAAVEGVMRII). Over 338-344 (GAKEYDL) the chain is Lumenal. A helical membrane pass occupies residues 345 to 365 (VLLAGIPLALLDSGLCWWIFV). Residues 366-384 (SLAQTMKTLKLRKNTVKYS) lie on the Cytoplasmic side of the membrane. The chain crosses the membrane as a helical span at residues 385–405 (LYRHFTNTLIFAILASIIFMI). Residues 406-422 (WRTKKFQLVDCQADWME) lie on the Lumenal side of the membrane. A helical membrane pass occupies residues 423–443 (LWVDDAYWRFLFFIILLVIMF). Topologically, residues 444–541 (LWRPSANNQR…MTKYEMSKIE (98 aa)) are cytoplasmic.

It belongs to the LU7TM family. TMEM87 subfamily.

The protein resides in the cell membrane. It localises to the golgi apparatus membrane. In terms of biological role, potential monoatomic ion channel gated by mechanical force, implicated in normal touch sensitivity through the generation of mechanically activated currents. However, a direct channel activity is debated and an alternative could be that it functions as a chaperone for an unidentified mechanosensitive ion channel. Could also be involved in cell mechanosensitivity regulating cell adhesion and migration. May also be involved in retrograde transport from endosomes to the trans-Golgi network (TGN). This is Transmembrane protein 87A from Xenopus tropicalis (Western clawed frog).